Consider the following 722-residue polypeptide: Probable glycerol-3-phosphate dehydrogenase, mitochondrial (722 aa).

A mitochondrion-targeting transit peptide spans 1-43; that stretch reads MSWVRFTKTGVAVVATSAAAVLALDMTNERRFQRQVKDHFRTV. 76–104 is an FAD binding site; that stretch reads DVLIIGGGATGAGVALDAQTRGLKTALVE. EF-hand domains are found at residues 624–659 and 660–695; these read EEMQRAKERFQQLDKDRKGHITVNDLRKHFREHNQK and IDERVLHELLNEVDLNKNGEIEIAEFFQLYSGLKGG. The Ca(2+) site is built by D673, N675, N677, E679, and E684.

Belongs to the FAD-dependent glycerol-3-phosphate dehydrogenase family. Requires FAD as cofactor.

It localises to the mitochondrion. The enzyme catalyses a quinone + sn-glycerol 3-phosphate = dihydroxyacetone phosphate + a quinol. Its pathway is polyol metabolism; glycerol degradation via glycerol kinase pathway; glycerone phosphate from sn-glycerol 3-phosphate (anaerobic route): step 1/1. Its activity is regulated as follows. Calcium-binding enhances the activity of the enzyme. This Caenorhabditis elegans protein is Probable glycerol-3-phosphate dehydrogenase, mitochondrial.